Here is a 149-residue protein sequence, read N- to C-terminus: Large ribosomal subunit protein bL9 (149 aa).

The protein belongs to the bacterial ribosomal protein bL9 family.

Functionally, binds to the 23S rRNA. The sequence is that of Large ribosomal subunit protein bL9 from Geobacillus sp. (strain WCH70).